A 185-amino-acid polypeptide reads, in one-letter code: Adenylyl-sulfate kinase (185 aa).

13-20 contacts ATP; that stretch reads GLSGAGKT. Ser-87 serves as the catalytic Phosphoserine intermediate.

The protein belongs to the APS kinase family.

The catalysed reaction is adenosine 5'-phosphosulfate + ATP = 3'-phosphoadenylyl sulfate + ADP + H(+). The protein operates within sulfur metabolism; hydrogen sulfide biosynthesis; sulfite from sulfate: step 2/3. Catalyzes the synthesis of activated sulfate. The polypeptide is Adenylyl-sulfate kinase (Halothermothrix orenii (strain H 168 / OCM 544 / DSM 9562)).